The primary structure comprises 41 residues: Photosystem I reaction center subunit IX (41 aa).

The helical transmembrane segment at 7–27 (YLSTVPVVFAIWLTFTAGLII) threads the bilayer.

The protein belongs to the PsaJ family.

Its subcellular location is the plastid. The protein localises to the chloroplast thylakoid membrane. Functionally, may help in the organization of the PsaE and PsaF subunits. The protein is Photosystem I reaction center subunit IX of Bigelowiella natans (Pedinomonas minutissima).